Consider the following 429-residue polypeptide: Histidinol dehydrogenase (429 aa).

Positions 127, 188, and 211 each coordinate NAD(+). Positions 234, 256, and 259 each coordinate substrate. 2 residues coordinate Zn(2+): glutamine 256 and histidine 259. Catalysis depends on proton acceptor residues glutamate 324 and histidine 325. Histidine 325, aspartate 358, glutamate 412, and histidine 417 together coordinate substrate. Aspartate 358 is a binding site for Zn(2+). Histidine 417 is a Zn(2+) binding site.

This sequence belongs to the histidinol dehydrogenase family. Zn(2+) is required as a cofactor.

It catalyses the reaction L-histidinol + 2 NAD(+) + H2O = L-histidine + 2 NADH + 3 H(+). It functions in the pathway amino-acid biosynthesis; L-histidine biosynthesis; L-histidine from 5-phospho-alpha-D-ribose 1-diphosphate: step 9/9. Catalyzes the sequential NAD-dependent oxidations of L-histidinol to L-histidinaldehyde and then to L-histidine. This chain is Histidinol dehydrogenase, found in Bacillus thuringiensis subsp. konkukian (strain 97-27).